Consider the following 309-residue polypeptide: Ribosomal RNA small subunit methyltransferase H (309 aa).

S-adenosyl-L-methionine contacts are provided by residues Gly-33–His-35, Asp-53, Phe-79, Asp-100, and Gln-107.

Belongs to the methyltransferase superfamily. RsmH family.

It localises to the cytoplasm. The enzyme catalyses cytidine(1402) in 16S rRNA + S-adenosyl-L-methionine = N(4)-methylcytidine(1402) in 16S rRNA + S-adenosyl-L-homocysteine + H(+). Functionally, specifically methylates the N4 position of cytidine in position 1402 (C1402) of 16S rRNA. The polypeptide is Ribosomal RNA small subunit methyltransferase H (Clostridium botulinum (strain 657 / Type Ba4)).